Here is a 174-residue protein sequence, read N- to C-terminus: MALLEIIHYPSKILRTISKEVVSFDAKLHQQLDDMHETMIASEGIGLAAIQVGLPLRMLIINLPREDGVQHKEDCLEIINPKFIETGGSMMYREGCLSVPGFYEEVERFEKVKIEYQNRFAEVKVLEASELLAVAIQHEIDHLNGVLFVDKLSILKRKKFEKELKELQKKQKHK.

Fe cation contacts are provided by cysteine 96 and histidine 138. Glutamate 139 is a catalytic residue. Histidine 142 is a Fe cation binding site.

The protein belongs to the polypeptide deformylase family. Fe(2+) is required as a cofactor.

The catalysed reaction is N-terminal N-formyl-L-methionyl-[peptide] + H2O = N-terminal L-methionyl-[peptide] + formate. In terms of biological role, removes the formyl group from the N-terminal Met of newly synthesized proteins. Requires at least a dipeptide for an efficient rate of reaction. N-terminal L-methionine is a prerequisite for activity but the enzyme has broad specificity at other positions. In Helicobacter pylori (strain G27), this protein is Peptide deformylase.